The sequence spans 98 residues: Protein FAM24A (98 aa).

The N-terminal stretch at 1 to 29 (MFDLRTKVMIGIASTLLIAAIMLITLVFC) is a signal peptide.

This sequence belongs to the FAM24 family.

It is found in the secreted. The protein is Protein FAM24A (Fam24a) of Mus musculus (Mouse).